The sequence spans 425 residues: Serine--tRNA ligase (425 aa).

Disordered stretches follow at residues 43–68 (QRSSLQAEGNRIGKEVGQRIQQGSDP) and 108–131 (LPNLPSPDCPEGRDENDNQERHCW). A compositionally biased stretch (basic and acidic residues) spans 117–131 (PEGRDENDNQERHCW). 233-235 (TAE) provides a ligand contact to L-serine. 264–266 (RRE) is a binding site for ATP. E287 is an L-serine binding site. An ATP-binding site is contributed by 351–354 (EISS). S385 lines the L-serine pocket.

This sequence belongs to the class-II aminoacyl-tRNA synthetase family. Type-1 seryl-tRNA synthetase subfamily. Homodimer. The tRNA molecule binds across the dimer.

The protein localises to the cytoplasm. The enzyme catalyses tRNA(Ser) + L-serine + ATP = L-seryl-tRNA(Ser) + AMP + diphosphate + H(+). The catalysed reaction is tRNA(Sec) + L-serine + ATP = L-seryl-tRNA(Sec) + AMP + diphosphate + H(+). It functions in the pathway aminoacyl-tRNA biosynthesis; selenocysteinyl-tRNA(Sec) biosynthesis; L-seryl-tRNA(Sec) from L-serine and tRNA(Sec): step 1/1. Its function is as follows. Catalyzes the attachment of serine to tRNA(Ser). Is also able to aminoacylate tRNA(Sec) with serine, to form the misacylated tRNA L-seryl-tRNA(Sec), which will be further converted into selenocysteinyl-tRNA(Sec). In Prochlorococcus marinus (strain MIT 9303), this protein is Serine--tRNA ligase.